The following is a 231-amino-acid chain: Large ribosomal subunit protein uL1 (231 aa).

The protein belongs to the universal ribosomal protein uL1 family. As to quaternary structure, part of the 50S ribosomal subunit.

In terms of biological role, binds directly to 23S rRNA. The L1 stalk is quite mobile in the ribosome, and is involved in E site tRNA release. Functionally, protein L1 is also a translational repressor protein, it controls the translation of the L11 operon by binding to its mRNA. This Mycoplasmopsis synoviae (strain 53) (Mycoplasma synoviae) protein is Large ribosomal subunit protein uL1.